Reading from the N-terminus, the 1088-residue chain is DNA-directed RNA polymerase subunit beta (1088 aa).

Belongs to the RNA polymerase beta chain family. As to quaternary structure, in plastids the minimal PEP RNA polymerase catalytic core is composed of four subunits: alpha, beta, beta', and beta''. When a (nuclear-encoded) sigma factor is associated with the core the holoenzyme is formed, which can initiate transcription.

It localises to the plastid. The protein localises to the chloroplast. It carries out the reaction RNA(n) + a ribonucleoside 5'-triphosphate = RNA(n+1) + diphosphate. Functionally, DNA-dependent RNA polymerase catalyzes the transcription of DNA into RNA using the four ribonucleoside triphosphates as substrates. This chain is DNA-directed RNA polymerase subunit beta, found in Chlorokybus atmophyticus (Soil alga).